Consider the following 194-residue polypeptide: ATP-dependent Clp protease proteolytic subunit (194 aa).

Catalysis depends on serine 98, which acts as the Nucleophile. Histidine 123 is an active-site residue.

This sequence belongs to the peptidase S14 family. As to quaternary structure, fourteen ClpP subunits assemble into 2 heptameric rings which stack back to back to give a disk-like structure with a central cavity, resembling the structure of eukaryotic proteasomes.

The protein resides in the cytoplasm. The catalysed reaction is Hydrolysis of proteins to small peptides in the presence of ATP and magnesium. alpha-casein is the usual test substrate. In the absence of ATP, only oligopeptides shorter than five residues are hydrolyzed (such as succinyl-Leu-Tyr-|-NHMec, and Leu-Tyr-Leu-|-Tyr-Trp, in which cleavage of the -Tyr-|-Leu- and -Tyr-|-Trp bonds also occurs).. In terms of biological role, cleaves peptides in various proteins in a process that requires ATP hydrolysis. Has a chymotrypsin-like activity. Plays a major role in the degradation of misfolded proteins. The polypeptide is ATP-dependent Clp protease proteolytic subunit (Staphylococcus saprophyticus subsp. saprophyticus (strain ATCC 15305 / DSM 20229 / NCIMB 8711 / NCTC 7292 / S-41)).